The following is a 265-amino-acid chain: Silencing boundary-establishment protein FUB1-like protein (265 aa).

Residues 194 to 265 are disordered; the sequence is HPENRSRNEQ…MPPGSSDMFM (72 aa).

Belongs to the proteasome inhibitor PI31 family. As to quaternary structure, interacts with the 20S proteasome.

It localises to the cytoplasm. The protein resides in the nucleus. Functionally, may play a role in the establishment of transcriptional silencing boundaries, preventing the propagation of heterochromatic silencing. The sequence is that of Silencing boundary-establishment protein FUB1-like protein from Schizosaccharomyces pombe (strain 972 / ATCC 24843) (Fission yeast).